Here is a 174-residue protein sequence, read N- to C-terminus: Large ribosomal subunit protein uL10 (174 aa).

Belongs to the universal ribosomal protein uL10 family. In terms of assembly, part of the ribosomal stalk of the 50S ribosomal subunit. The N-terminus interacts with L11 and the large rRNA to form the base of the stalk. The C-terminus forms an elongated spine to which L12 dimers bind in a sequential fashion forming a multimeric L10(L12)X complex.

Functionally, forms part of the ribosomal stalk, playing a central role in the interaction of the ribosome with GTP-bound translation factors. In Anaeromyxobacter sp. (strain K), this protein is Large ribosomal subunit protein uL10.